The chain runs to 134 residues: D-ribose pyranase (134 aa).

Catalysis depends on histidine 20, which acts as the Proton donor. Substrate-binding positions include aspartate 28, histidine 101, and 123–125 (YSN).

The protein belongs to the RbsD / FucU family. RbsD subfamily. Homodecamer.

The protein localises to the cytoplasm. It catalyses the reaction beta-D-ribopyranose = beta-D-ribofuranose. It participates in carbohydrate metabolism; D-ribose degradation; D-ribose 5-phosphate from beta-D-ribopyranose: step 1/2. Functionally, catalyzes the interconversion of beta-pyran and beta-furan forms of D-ribose. The protein is D-ribose pyranase of Pseudomonas entomophila (strain L48).